Here is a 366-residue protein sequence, read N- to C-terminus: Aminomethyltransferase (366 aa).

Belongs to the GcvT family. The glycine cleavage system is composed of four proteins: P, T, L and H.

It catalyses the reaction N(6)-[(R)-S(8)-aminomethyldihydrolipoyl]-L-lysyl-[protein] + (6S)-5,6,7,8-tetrahydrofolate = N(6)-[(R)-dihydrolipoyl]-L-lysyl-[protein] + (6R)-5,10-methylene-5,6,7,8-tetrahydrofolate + NH4(+). Its function is as follows. The glycine cleavage system catalyzes the degradation of glycine. This is Aminomethyltransferase from Bordetella bronchiseptica (strain ATCC BAA-588 / NCTC 13252 / RB50) (Alcaligenes bronchisepticus).